The following is a 146-amino-acid chain: Large ribosomal subunit protein uL15 (146 aa).

Residues 1 to 10 are compositionally biased toward basic and acidic residues; it reads MTIKLHDLKP. A disordered region spans residues 1 to 52; it reads MTIKLHDLKPARGSKTPRTRVGRGEGSKGKTAGRGTKGTKARKNVPVTFEGG.

This sequence belongs to the universal ribosomal protein uL15 family. Part of the 50S ribosomal subunit.

Functionally, binds to the 23S rRNA. This is Large ribosomal subunit protein uL15 from Mycolicibacterium paratuberculosis (strain ATCC BAA-968 / K-10) (Mycobacterium paratuberculosis).